A 148-amino-acid chain; its full sequence is Phospholipase A2-alpha (148 aa).

Residues 1–20 form the signal peptide; the sequence is MAAPIILFSFLLFFSVSVSA. Disulfide bonds link cysteine 38/cysteine 66, cysteine 42/cysteine 72, cysteine 47/cysteine 122, cysteine 59/cysteine 79, cysteine 78/cysteine 105, and cysteine 85/cysteine 98. 3 residues coordinate Ca(2+): tyrosine 58, glycine 60, and tyrosine 63. Histidine 82 is an active-site residue. A Ca(2+)-binding site is contributed by aspartate 83.

The protein belongs to the phospholipase A2 family. As to quaternary structure, interacts with MYB30. Ca(2+) is required as a cofactor. Ubiquitous but expressed at a low level.

The protein resides in the secreted. It is found in the golgi apparatus. Its subcellular location is the cytoplasmic vesicle. The protein localises to the nucleus. It catalyses the reaction a 1,2-diacyl-sn-glycero-3-phosphocholine + H2O = a 1-acyl-sn-glycero-3-phosphocholine + a fatty acid + H(+). In terms of biological role, PA2 catalyzes the calcium-dependent hydrolysis of the 2-acyl groups in 3-sn-phosphoglycerides. Releases lysophospholipids (LPLs) and free fatty acids (FFAs) from membrane phospholipids in response to hormones and other external stimuli. Modulates the trafficking of PIN proteins to the plasma membrane. Negatively regulates MYB30 transcriptional activity and hypersensitive response control. This is Phospholipase A2-alpha from Arabidopsis thaliana (Mouse-ear cress).